A 272-amino-acid polypeptide reads, in one-letter code: 4-hydroxy-tetrahydrodipicolinate reductase (272 aa).

NAD(+) is bound by residues 11–16 (GVSGRM) and glutamate 37. Arginine 38 contacts NADP(+). Residues 101–103 (GTT) and 125–128 (AGNM) each bind NAD(+). Histidine 158 serves as the catalytic Proton donor/acceptor. Histidine 159 is a binding site for (S)-2,3,4,5-tetrahydrodipicolinate. Lysine 162 functions as the Proton donor in the catalytic mechanism. 168 to 169 (GT) provides a ligand contact to (S)-2,3,4,5-tetrahydrodipicolinate.

This sequence belongs to the DapB family.

It localises to the cytoplasm. It catalyses the reaction (S)-2,3,4,5-tetrahydrodipicolinate + NAD(+) + H2O = (2S,4S)-4-hydroxy-2,3,4,5-tetrahydrodipicolinate + NADH + H(+). The catalysed reaction is (S)-2,3,4,5-tetrahydrodipicolinate + NADP(+) + H2O = (2S,4S)-4-hydroxy-2,3,4,5-tetrahydrodipicolinate + NADPH + H(+). The protein operates within amino-acid biosynthesis; L-lysine biosynthesis via DAP pathway; (S)-tetrahydrodipicolinate from L-aspartate: step 4/4. Functionally, catalyzes the conversion of 4-hydroxy-tetrahydrodipicolinate (HTPA) to tetrahydrodipicolinate. The polypeptide is 4-hydroxy-tetrahydrodipicolinate reductase (Roseobacter denitrificans (strain ATCC 33942 / OCh 114) (Erythrobacter sp. (strain OCh 114))).